The following is a 921-amino-acid chain: Isoleucine--tRNA ligase (921 aa).

The 'HIGH' region signature appears at 57–67; it reads PYANGDIHMGH. Glu552 is a binding site for L-isoleucyl-5'-AMP. The short motif at 593-597 is the 'KMSKS' region element; sequence KMSKS. Residue Lys596 coordinates ATP. Residues Cys888, Cys891, Cys908, and Cys911 each coordinate Zn(2+).

The protein belongs to the class-I aminoacyl-tRNA synthetase family. IleS type 1 subfamily. As to quaternary structure, monomer. Requires Zn(2+) as cofactor.

The protein resides in the cytoplasm. It carries out the reaction tRNA(Ile) + L-isoleucine + ATP = L-isoleucyl-tRNA(Ile) + AMP + diphosphate. Its function is as follows. Catalyzes the attachment of isoleucine to tRNA(Ile). As IleRS can inadvertently accommodate and process structurally similar amino acids such as valine, to avoid such errors it has two additional distinct tRNA(Ile)-dependent editing activities. One activity is designated as 'pretransfer' editing and involves the hydrolysis of activated Val-AMP. The other activity is designated 'posttransfer' editing and involves deacylation of mischarged Val-tRNA(Ile). This chain is Isoleucine--tRNA ligase, found in Bacillus cereus (strain AH820).